The chain runs to 67 residues: Bombesin (67 aa).

The first 30 residues, 1–30 (MLLLSAVKTLLLAWLGIVLVFMSIIKSAML), serve as a signal peptide directing secretion. The propeptide occupies 31–49 (DFLQEAGKLEGIETYKKEA). Gln50 carries the post-translational modification Pyrrolidone carboxylic acid. Residue Met64 is modified to Methionine amide.

Expressed by the skin glands.

It is found in the secreted. In terms of biological role, stimulates smooth muscle contraction in isolated rat stomach strip. This Rana shuchinae (Sichuan frog) protein is Bombesin.